We begin with the raw amino-acid sequence, 414 residues long: MTEKLQPLRGMKDLLPDDYKVHDYIINKARDVGVLYGYKQMSTPLVEYTKVFNRSMGESSDVISKEIYSFLDKSNDFVALRPEFTACIIRSLISNRLQHKLPLKFFSTGPVFRYDRPQAGRQRQFHQLNYEYIGAKGAITDADTLKLAVDILKALEIEQDTTLELNSLGCNESRSVYQQKLVEYLNDFKDQLSEESKIRLSKNPMRILDSKSETDQKIIANAPVLSEYYTDESKEYFEELIQYLDILGMKYSINPRLVRGLDYYCHTAFEFTTKKLGSQSTILAGGRYDGLAKIMGNNDDVPAIGFAAGIERIALMREYNISEVKPVFVLPIGKNNICYALEIVDKLRTENIAIIIESLGKIAKRMQRIFNENAQFIIFIGDEEQANNNLKIKDLKKAEEYIVDFAKALELLKK.

The protein belongs to the class-II aminoacyl-tRNA synthetase family. In terms of assembly, homodimer.

It is found in the cytoplasm. It carries out the reaction tRNA(His) + L-histidine + ATP = L-histidyl-tRNA(His) + AMP + diphosphate + H(+). The polypeptide is Histidine--tRNA ligase (Rickettsia africae (strain ESF-5)).